We begin with the raw amino-acid sequence, 271 residues long: GPN-loop GTPase 3 (271 aa).

Residue 13–18 coordinates GTP; the sequence is GAGKST. The short motif at 70 to 72 is the Gly-Pro-Asn (GPN)-loop; involved in dimer interface element; it reads GPN. 173–176 provides a ligand contact to GTP; the sequence is SKLD.

Belongs to the GPN-loop GTPase family. In terms of assembly, heterodimers with GPN1 or GPN2. Binds to RNA polymerase II (RNAPII).

Its function is as follows. Small GTPase required for proper nuclear import of RNA polymerase II and III (RNAPII and RNAPIII). May act at an RNAP assembly step prior to nuclear import. The polypeptide is GPN-loop GTPase 3 (Candida glabrata (strain ATCC 2001 / BCRC 20586 / JCM 3761 / NBRC 0622 / NRRL Y-65 / CBS 138) (Yeast)).